Reading from the N-terminus, the 744-residue chain is Collagen alpha-1(VIII) chain (744 aa).

The first 24 residues, 1–24 (MAVPPRPLQLLGILFIISLNSVRL), serve as a signal peptide directing secretion. A nonhelical region (NC2) region spans residues 29–118 (AYYGIKPLPP…KGEVPLASLR (90 aa)). A compositionally biased stretch (basic and acidic residues) spans 101 to 110 (KEVVPKKGKG). Disordered stretches follow at residues 101-395 (KEVV…EPGL), 412-439 (GPKG…GFPG), and 457-590 (GPIG…DMGL). The interval 119 to 572 (GEQGPRGEPG…PGPPGPPGPP (454 aa)) is triple-helical region (COL1). Residues 129–138 (PRGPPGPPGL) are compositionally biased toward pro residues. Over residues 169–191 (KPGAMGMPGAKGEIGPKGEIGPM) the composition is skewed to low complexity. Gly residues predominate over residues 204–218 (GLPGIGKPGGPGLPG). Residues 298–307 (PQGLIGVPGV) show a composition bias toward low complexity. 2 stretches are compositionally biased toward gly residues: residues 329-338 (GFPGGKGEQG) and 412-421 (GPKGEGGVVG). 2 stretches are compositionally biased toward low complexity: residues 470 to 507 (LPGL…VGPS) and 548 to 557 (PGALGPQGQP). Pro residues predominate over residues 559–579 (LPGPPGPPGPPGPPAVMPTPS). A nonhelical region (NC1) region spans residues 573-744 (AVMPTPSPQG…SFSGYLLYPM (172 aa)). The region spanning 611–744 (PAYEMPAFTA…SFSGYLLYPM (134 aa)) is the C1q domain.

In terms of assembly, homotrimers, or heterotrimers in association with alpha 2(VIII) type collagens. Four homotrimers can form a tetrahedron stabilized by central interacting C-terminal NC1 trimers. In terms of processing, prolines at the third position of the tripeptide repeating unit (G-X-Y) are hydroxylated in some or all of the chains. Post-translationally, proteolytically cleaved by neutrophil elastase, in vitro. Proteolytic processing produces the C-terminal NC1 domain fragment, vastatin. High levels in calvarium, eye and skin of newborn mice; also in various epithelial, endothelial and mesenchymal cells.

It localises to the secreted. Its subcellular location is the extracellular space. The protein localises to the extracellular matrix. It is found in the basement membrane. Macromolecular component of the subendothelium. Major component of the Descemet's membrane (basement membrane) of corneal endothelial cells. Also a component of the endothelia of blood vessels. Necessary for migration and proliferation of vascular smooth muscle cells and thus, has a potential role in the maintenance of vessel wall integrity and structure, in particular in atherogenesis. In terms of biological role, vastatin, the C-terminal fragment comprising the NC1 domain, inhibits aortic endothelial cell proliferation and causes cell apoptosis. This Mus musculus (Mouse) protein is Collagen alpha-1(VIII) chain (Col8a1).